Reading from the N-terminus, the 401-residue chain is Multidrug resistance protein MdtA (401 aa).

Residues 1–20 (MNQNNKHRTLLFRAALAAIA) form the signal peptide.

This sequence belongs to the membrane fusion protein (MFP) (TC 8.A.1) family. As to quaternary structure, part of a tripartite efflux system composed of MdtA, MdtB and MdtC.

It localises to the cell inner membrane. This chain is Multidrug resistance protein MdtA, found in Photorhabdus laumondii subsp. laumondii (strain DSM 15139 / CIP 105565 / TT01) (Photorhabdus luminescens subsp. laumondii).